The following is a 104-amino-acid chain: Large ribosomal subunit protein uL24 (104 aa).

Belongs to the universal ribosomal protein uL24 family. Part of the 50S ribosomal subunit.

In terms of biological role, one of two assembly initiator proteins, it binds directly to the 5'-end of the 23S rRNA, where it nucleates assembly of the 50S subunit. One of the proteins that surrounds the polypeptide exit tunnel on the outside of the subunit. The sequence is that of Large ribosomal subunit protein uL24 from Shewanella loihica (strain ATCC BAA-1088 / PV-4).